The sequence spans 201 residues: Small ribosomal subunit protein uS4c (201 aa).

A disordered region spans residues 20-44 (GLTSKRPKAGSDLRNQSRSGKKSQY). In terms of domain architecture, S4 RNA-binding spans 89–152 (MRLDNILFRL…NSRTLVQNLL (64 aa)).

The protein belongs to the universal ribosomal protein uS4 family. Part of the 30S ribosomal subunit. Contacts protein S5. The interaction surface between S4 and S5 is involved in control of translational fidelity.

Its subcellular location is the plastid. It is found in the chloroplast. One of the primary rRNA binding proteins, it binds directly to 16S rRNA where it nucleates assembly of the body of the 30S subunit. In terms of biological role, with S5 and S12 plays an important role in translational accuracy. This chain is Small ribosomal subunit protein uS4c (rps4), found in Barbarea verna (Land cress).